The sequence spans 217 residues: MVTFVSEMRIPVVIPYKPIQPKTRLSCILTDEEREDFAFMMLRDVVNAVKNAGCSPLILATAPVELDDVPVRILEEGLNETINGFCEGNDEPLAIVMADLALADRSAILTLLTSGGDLAIAPGRGGGTNAIYVRSAKMFQAQYYGMSYEKHVRYGTDAGLMVKIIDSFRLYCDIDEQDDLIEVFIHNTGYSREWLISHGFEIAMKKSRIGVKRPGYE.

The protein belongs to the CofC family. In terms of assembly, homodimer.

It catalyses the reaction (2S)-2-phospholactate + GTP + H(+) = (2S)-lactyl-2-diphospho-5'-guanosine + diphosphate. Its pathway is cofactor biosynthesis; coenzyme F420 biosynthesis. In terms of biological role, guanylyltransferase that catalyzes the activation of (2S)-2-phospholactate (2-PL) as (2S)-lactyl-2-diphospho-5'-guanosine, via the condensation of 2-PL with GTP. It is involved in the biosynthesis of coenzyme F420, a hydride carrier cofactor. This chain is 2-phospho-L-lactate guanylyltransferase, found in Methanospirillum hungatei JF-1 (strain ATCC 27890 / DSM 864 / NBRC 100397 / JF-1).